We begin with the raw amino-acid sequence, 200 residues long: Small ribosomal subunit protein uS4 (200 aa).

The segment at 22 to 43 (TGKELERRPYAPGQHGPTQRKK) is disordered. In terms of domain architecture, S4 RNA-binding spans 92–170 (QRLDNIVYRL…VPEYVTFDAE (79 aa)).

The protein belongs to the universal ribosomal protein uS4 family. Part of the 30S ribosomal subunit. Contacts protein S5. The interaction surface between S4 and S5 is involved in control of translational fidelity.

Functionally, one of the primary rRNA binding proteins, it binds directly to 16S rRNA where it nucleates assembly of the body of the 30S subunit. Its function is as follows. With S5 and S12 plays an important role in translational accuracy. The polypeptide is Small ribosomal subunit protein uS4 (Listeria welshimeri serovar 6b (strain ATCC 35897 / DSM 20650 / CCUG 15529 / CIP 8149 / NCTC 11857 / SLCC 5334 / V8)).